Here is a 321-residue protein sequence, read N- to C-terminus: Leucine-rich repeat-containing protein 46 (321 aa).

LRR repeat units follow at residues 45–66 (ELQT…EGLK), 67–88 (NLHS…ACVP), 89–110 (SLRF…LDLP), and 111–132 (CLQF…EFPQ). Positions 142-184 (NSCTNQDSYRELVIEALPLLLDLDGQPVMERWISDEEDEASSE) constitute an LRRCT domain. Phosphoserine is present on residues S175 and S182. A coiled-coil region spans residues 198 to 222 (RGFLKELEQELSRHREHRQQAALTQ). Residues 235–321 (NLPLLPGVPM…TKTMAKRSKK (87 aa)) form a disordered region.

It localises to the cell projection. Its subcellular location is the cilium. The protein localises to the flagellum. In terms of biological role, required for normal spermatogenesis and male fertility. Plays an important role in sperm flagellum biogenesis. The polypeptide is Leucine-rich repeat-containing protein 46 (LRRC46) (Macaca fascicularis (Crab-eating macaque)).